The sequence spans 2227 residues: Genome polyprotein (2227 aa).

Short sequence motifs ((L)YPX(n)L motif) lie at residues 167–171 (YPHGL) and 200–205 (YPVWEL). The tract at residues 766–836 (MMSRIAAGDL…PRKMKGLFSQ (71 aa)) is involved in P1-2A pentamerization. A helical membrane pass occupies residues 1010–1030 (VTVEIINTVLCFVKSGILLYV). Residues 1043 to 1070 (IGLLRVMNYADIGCSVISCGKVFSKMLE) are membrane-penetrating ability. Residues 1127–1152 (KKKDVLNVLKDNQQKIERAIEEADNF) are a coiled coil. The region spanning 1204-1366 (HQKLKNLGSI…SFFKNPHNDM (163 aa)) is the SF3 helicase domain. 1230–1237 (GKRGGGKS) provides a ligand contact to ATP. The chain crosses the membrane as a helical span at residues 1462-1482 (WVAVGAAVGILGVLVGGWFVY). An O-(5'-phospho-RNA)-tyrosine modification is found at Tyr1499. The Peptidase C3 domain occupies 1514 to 1728 (DPVESQSTLE…VAKLVTQEMF (215 aa)). Active-site for protease 3C activity residues include His1563, Asp1603, and Cys1691. A RdRp catalytic domain is found at 1976–2097 (DVGLDLDFSA…VFSRDIQIDN (122 aa)). Asp2083 (for RdRp activity) is an active-site residue.

It belongs to the picornaviridae polyprotein family. As to quaternary structure, homodimer. Homomultimer; probably interacts with membranes in a multimeric form. Seems to assemble into amyloid-like fibers. Homodimer. Monomer. Interacts with protein 3CD. In terms of assembly, interacts with host ACBD3. As to quaternary structure, interacts with protein 3AB. Interacts with human MAVS. In terms of assembly, homodimer; disulfide-linked. As to quaternary structure, homopentamer. Homooligomer. Interacts with capsid protein VP2. Interacts with capsid protein VP3. In terms of assembly, interacts with capsid protein VP1. Interacts with capsid protein VP3. As to quaternary structure, interacts with capsid protein VP1. Interacts with capsid protein VP2. In terms of processing, specific enzymatic cleavages by viral protease in vivo yield a variety of precursors and mature proteins. Polyprotein processing intermediates are produced, such as P1-2A which is a functional precursor of the structural proteins, VP0 which is a VP4-VP2 precursor, VP1-2A precursor, 3ABC precursor which is a stable and catalytically active precursor of 3A, 3B and 3C proteins, 3AB and 3CD precursors. The assembly signal 2A is removed from VP1-2A by a host protease, possibly host Cathepsin L. This cleavage occurs over a region of 3 amino-acids probably generating VP1 proteins with heterogeneous C-termini. Post-translationally, during virion maturation, immature virions are rendered infectious following cleavage of VP0 into VP4 and VP2. This maturation seems to be an autocatalytic event triggered by the presence of RNA in the capsid and is followed by a conformational change of the particle. The assembly signal 2A is removed from VP1-2A by a host protease, possibly host Cathepsin L in naked virions. This cleavage does not occur in enveloped virions. This cleavage occurs over a region of 3 amino-acids probably generating VP1 proteins with heterogeneous C-termini. In terms of processing, VPg is uridylylated prior to priming replication into VPg-pUpU. Post-translationally, unlike other picornaviruses, does not seem to be myristoylated.

It localises to the virion. The protein localises to the host endosome. Its subcellular location is the host multivesicular body. The protein resides in the host membrane. It is found in the host mitochondrion outer membrane. It localises to the host cytoplasm. The protein localises to the host cytoplasmic vesicle membrane. The enzyme catalyses RNA(n) + a ribonucleoside 5'-triphosphate = RNA(n+1) + diphosphate. It catalyses the reaction a ribonucleoside 5'-triphosphate + H2O = a ribonucleoside 5'-diphosphate + phosphate + H(+). The catalysed reaction is Selective cleavage of Gln-|-Gly bond in the poliovirus polyprotein. In other picornavirus reactions Glu may be substituted for Gln, and Ser or Thr for Gly.. Capsid proteins VP1, VP2, and VP3 form a closed capsid enclosing the viral positive strand RNA genome. All these proteins contain a beta-sheet structure called beta-barrel jelly roll. Together they form an icosahedral capsid (T=3) composed of 60 copies of each VP1, VP2, and VP3, with a diameter of approximately 300 Angstroms. VP1 is situated at the 12 fivefold axes, whereas VP2 and VP3 are located at the quasi-sixfold axes. The naked capsid interacts with the host receptor HAVCR1 to provide virion attachment to and probably entry into the target cell. Its function is as follows. VP0 precursor is a component of the immature procapsids. Functionally, plays a role in the assembly of the 12 pentamers into an icosahedral structure. Has not been detected in mature virions, supposedly owing to its small size. In terms of biological role, precursor component of immature procapsids that corresponds to an extended form of the structural protein VP1. After maturation, possibly by the host Cathepsin L, the assembly signal 2A is cleaved to give rise to the mature VP1 protein. Functions as a viroporin. Affects membrane integrity and causes an increase in membrane permeability. Involved in host intracellular membrane rearrangements probably to give rise to the viral factories. Does not disrupt calcium homeostasis or glycoprotein trafficking. Antagonizes the innate immune response of the host by suppressing IFN-beta synthesis, which it achieves by interfering with the RIG-I/IFIH1 pathway. Its function is as follows. Affects membrane integrity and causes an increase in membrane permeability. Functionally, associates with and induces structural rearrangements of intracellular membranes. Displays RNA-binding activity. In terms of biological role, the precursor 3ABC is targeted to the mitochondrial membrane where protease 3C activity cleaves and inhibits the host antiviral protein MAVS, thereby disrupting activation of IRF3 through the IFIH1/MDA5 pathway. In vivo, the protease activity of 3ABC precursor is more efficient in cleaving the 2BC precursor than that of protein 3C. The 3ABC precursor may therefore play a role in the proteolytic processing of the polyprotein. Possible viroporin. Interacts with the 3CD precursor and with RNA structures found at both the 5'- and 3'-termini of the viral genome. Since the 3AB precursor contains the hydrophobic domain 3A, it probably anchors the whole viral replicase complex to intracellular membranes on which viral RNA synthesis occurs. Its function is as follows. May serve as membrane anchor to the 3AB and 3ABC precursors via its hydrophobic domain. May interact with RNA. Functionally, acts as a primer for viral RNA replication and remains covalently bound to viral genomic RNA. VPg is uridylylated prior to priming replication into VPg-pUpU. The VPg-pUpU is then used as primer on the genomic RNA poly(A) by the RNA-dependent RNA polymerase to replicate the viral genome. In terms of biological role, cysteine protease that generates mature viral proteins from the precursor polyprotein. In addition to its proteolytic activity, it binds to viral RNA, and thus influences viral genome replication. RNA and substrate bind cooperatively to the protease. Cleaves IKBKG/NEMO to impair innate immune signaling. Cleaves host PABPC1 which may participate in the switch of viral translation to RNA synthesis. Interacts with the 3AB precursor and with RNA structures found at both the 5'- and 3'-termini of the viral genome. Disrupts TLR3 signaling by degrading the host adapter protein TICAM1/TRIF. Its function is as follows. RNA-directed RNA polymerase 3D-POL replicates genomic and antigenomic RNA by recognizing replications specific signals. This chain is Genome polyprotein, found in Human hepatitis A virus genotype IIB (isolate SLF88) (HHAV).